A 491-amino-acid polypeptide reads, in one-letter code: Iota-carrageenase (491 aa).

A signal peptide spans 1-19; that stretch reads MKLQFKPVYLASIAIMAIG. A disulfide bridge connects residues Cys-422 and Cys-490.

The protein belongs to the glycosyl hydrolase 82 family.

Its subcellular location is the secreted. It catalyses the reaction Endohydrolysis of 1,4-beta-D-linkages between D-galactose 4-sulfate and 3,6-anhydro-D-galactose-2-sulfate in iota-carrageenans.. Hydrolyzes iota-carrageenans, sulfated 1,3-alpha-1,4-beta galactans from red algal cell walls, with an inversion of anomeric configuration. Also active against hybrid iota-/nu-carrageenan, not active against kappa- or lambda-carrageenans. The sequence is that of Iota-carrageenase from Zobellia galactanivorans (strain DSM 12802 / CCUG 47099 / CIP 106680 / NCIMB 13871 / Dsij).